Reading from the N-terminus, the 993-residue chain is Ephrin type-A receptor 7 (993 aa).

The signal sequence occupies residues 1–27; it reads MVLRSRLPPWIMLCSVWLLRFAHTGEA. The Extracellular portion of the chain corresponds to 28-550; that stretch reads QAAKEVILLD…TAVSSEQNPV (523 aa). The Eph LBD domain occupies 32 to 210; sequence EVILLDSKAQ…YYKKCWSIIE (179 aa). Fibronectin type-III domains follow at residues 331-441 and 442-537; these read PPSA…TGQA and APSQ…TLEE. Asparagine 343 and asparagine 410 each carry an N-linked (GlcNAc...) asparagine glycan. The chain crosses the membrane as a helical span at residues 551–571; that stretch reads IIIAVVAVAGTIILVFMVFGF. Residues 572–993 lie on the Cytoplasmic side of the membrane; the sequence is IIGRRHCGYS…LHLHGTGIQV (422 aa). Tyrosine 603 and tyrosine 609 each carry phosphotyrosine; by autocatalysis. The 262-residue stretch at 628-889 folds into the Protein kinase domain; the sequence is IKIERVIGAG…QIVGILDKMI (262 aa). ATP contacts are provided by residues 634-642 and lysine 660; that span reads IGAGEFGEV. The active-site Proton acceptor is the aspartate 753. 2 positions are modified to phosphotyrosine; by autocatalysis: tyrosine 786 and tyrosine 935. The 65-residue stretch at 918–982 folds into the SAM domain; sequence TTFCSVGEWL…MSSIQTMRAQ (65 aa). Residues 991 to 993 carry the PDZ-binding motif; that stretch reads IQV.

The protein belongs to the protein kinase superfamily. Tyr protein kinase family. Ephrin receptor subfamily. In terms of assembly, heterotetramer upon binding of the ligand. The heterotetramer is composed of an ephrin dimer and a receptor dimer. Oligomerization is probably required to induce biological responses. In terms of processing, phosphorylated.

The protein localises to the cell membrane. It carries out the reaction L-tyrosyl-[protein] + ATP = O-phospho-L-tyrosyl-[protein] + ADP + H(+). Its function is as follows. Receptor tyrosine kinase which binds promiscuously GPI-anchored ephrin-A family ligands residing on adjacent cells, leading to contact-dependent bidirectional signaling into neighboring cells. The signaling pathway downstream of the receptor is referred to as forward signaling while the signaling pathway downstream of the ephrin ligand is referred to as reverse signaling. Among GPI-anchored ephrin-A ligands, EFNA5 is a cognate/functional ligand for EPHA7 and their interaction regulates brain development modulating cell-cell adhesion and repulsion. Has a repellent activity on axons and is for instance involved in the guidance of corticothalamic axons and in the proper topographic mapping of retinal axons to the colliculus. May also regulate brain development through a caspase(CASP3)-dependent proapoptotic activity. Forward signaling may result in activation of components of the ERK signaling pathway including MAP2K1, MAP2K2, MAPK1 and MAPK3 which are phosphorylated upon activation of EPHA7. The protein is Ephrin type-A receptor 7 (EPHA7) of Gallus gallus (Chicken).